Consider the following 101-residue polypeptide: Ubiquitin-related modifier 1 homolog (101 aa).

G101 bears the 1-thioglycine mark. G101 participates in a covalent cross-link: Glycyl lysine isopeptide (Gly-Lys) (interchain with K-? in acceptor proteins).

Belongs to the URM1 family. In terms of assembly, interacts with cer. Post-translationally, C-terminal thiocarboxylation occurs in 2 steps, it is first acyl-adenylated (-COAMP) via the hesA/moeB/thiF part of the MOCS3 homolog, then thiocarboxylated (-COSH) via the rhodanese domain of the MOCS3 homolog.

The protein localises to the cytoplasm. The protein operates within tRNA modification; 5-methoxycarbonylmethyl-2-thiouridine-tRNA biosynthesis. Acts as a sulfur carrier required for 2-thiolation of mcm(5)S(2)U at tRNA wobble positions of cytosolic tRNA(Lys), tRNA(Glu) and tRNA(Gln). Serves as sulfur donor in tRNA 2-thiolation reaction by being thiocarboxylated (-COSH) at its C-terminus by MOCS3. The sulfur is then transferred to tRNA to form 2-thiolation of mcm(5)S(2)U. Also acts as a ubiquitin-like protein (UBL) that is covalently conjugated via an isopeptide bond to lysine residues of target proteins such as Prx2/Jafrac1, Ciao1, Eip71CD and GILT1. The thiocarboxylated form serves as substrate for conjugation and oxidative stress specifically induces the formation of UBL-protein conjugates. The sequence is that of Ubiquitin-related modifier 1 homolog from Drosophila yakuba (Fruit fly).